Here is a 261-residue protein sequence, read N- to C-terminus: Protein unc-50 homolog (261 aa).

Helical transmembrane passes span 37–57 (IFHYPQMDIEYTFWIMFYLCF), 82–102 (AFAVILVFFMAIASMSYAITF), 113–133 (VMFWAVFVDFITVGLLIATIG), 166–186 (SFFPLFIILYVVQFFLLPILL), 190–210 (LFAAILSNTLYIIGFSYYYYV), and 225–245 (VVFLYPIGILFALYIVSVVMG).

It belongs to the unc-50 family.

The protein localises to the membrane. This Dictyostelium discoideum (Social amoeba) protein is Protein unc-50 homolog.